The following is a 469-amino-acid chain: Protein C-ets-2 (469 aa).

The PNT domain maps to 85–170; sequence ATFSGFKKEQ…EHLEQMIKEN (86 aa). Residues serine 220 and serine 225 each carry the phosphoserine modification. A disordered region spans residues 264-289; it reads NLLTNNSGTPKDHDSPENGADSFESS. Phosphoserine is present on residues serine 295, serine 298, and serine 301. Positions 363–443 form a DNA-binding region, ETS; the sequence is IQLWQFLLEL…SGKRYVYRFV (81 aa).

Belongs to the ETS family. Phosphorylation by CDK10 at Ser-220 and Ser-225 creates a phosphodegron that targets ETS2 for proteasomal degradation.

The protein localises to the nucleus. Transcription factor activating transcription. Binds specifically the DNA GGAA/T core motif (Ets-binding site or EBS) in gene promoters and stimulates transcription. In Homo sapiens (Human), this protein is Protein C-ets-2 (ETS2).